Here is a 232-residue protein sequence, read N- to C-terminus: Triggering receptor expressed on myeloid cells 1 (232 aa).

Residues methionine 1 to alanine 20 form the signal peptide. Residues alanine 21 to arginine 125 form the Ig-like V-type domain. At alanine 21–serine 203 the chain is on the extracellular side. A disulfide bridge connects residues cysteine 41 and cysteine 109. The disordered stretch occupies residues proline 152–phenylalanine 186. Asparagine 192 carries N-linked (GlcNAc...) asparagine glycosylation. Residues isoleucine 204 to alanine 224 traverse the membrane as a helical segment. Residues valine 225 to serine 232 lie on the Cytoplasmic side of the membrane.

In terms of assembly, monomer. Homomultimer; when activated. Interacts with TYROBP/DAP12. Interacts with TLR4. As to expression, detected in bone marrow, tongue, lung, liver, thymus, spleen, jejunum, ileum and lymph nodes.

Its subcellular location is the cell membrane. Its function is as follows. Cell surface receptor that plays important roles in innate and adaptive immunity by amplifying inflammatory responses. Upon activation by various ligands such as PGLYRP1, HMGB1 or HSP70, multimerizes and forms a complex with transmembrane adapter TYROBP/DAP12. In turn, initiates a SYK-mediated cascade of tyrosine phosphorylation, activating multiple downstream mediators such as BTK, MAPK1, MAPK3 or phospholipase C-gamma. This cascade promotes the neutrophil- and macrophage-mediated release of pro-inflammatory cytokines and/or chemokines, as well as their migration and thereby amplifies inflammatory responses that are triggered by bacterial and fungal infections. By also promoting the amplification of inflammatory signals that are initially triggered by Toll-like receptor (TLR) and NOD-like receptor engagement, plays a major role in the pathophysiology of acute and chronic inflammatory diseases of different etiologies including septic shock and atherosclerosis. The chain is Triggering receptor expressed on myeloid cells 1 (TREM1) from Bos taurus (Bovine).